A 369-amino-acid chain; its full sequence is tRNA 2-selenouridine synthase (369 aa).

The Rhodanese domain occupies 15 to 138 (MLSGHPMMDV…MRQYLIEVID (124 aa)). The active-site S-selanylcysteine intermediate is cysteine 98.

Belongs to the SelU family. In terms of assembly, monomer.

The enzyme catalyses 5-methylaminomethyl-2-thiouridine(34) in tRNA + selenophosphate + (2E)-geranyl diphosphate + H2O + H(+) = 5-methylaminomethyl-2-selenouridine(34) in tRNA + (2E)-thiogeraniol + phosphate + diphosphate. The catalysed reaction is 5-methylaminomethyl-2-thiouridine(34) in tRNA + (2E)-geranyl diphosphate = 5-methylaminomethyl-S-(2E)-geranyl-thiouridine(34) in tRNA + diphosphate. It carries out the reaction 5-methylaminomethyl-S-(2E)-geranyl-thiouridine(34) in tRNA + selenophosphate + H(+) = 5-methylaminomethyl-2-(Se-phospho)selenouridine(34) in tRNA + (2E)-thiogeraniol. It catalyses the reaction 5-methylaminomethyl-2-(Se-phospho)selenouridine(34) in tRNA + H2O = 5-methylaminomethyl-2-selenouridine(34) in tRNA + phosphate. Its function is as follows. Involved in the post-transcriptional modification of the uridine at the wobble position (U34) of tRNA(Lys), tRNA(Glu) and tRNA(Gln). Catalyzes the conversion of 2-thiouridine (S2U-RNA) to 2-selenouridine (Se2U-RNA). Acts in a two-step process involving geranylation of 2-thiouridine (S2U) to S-geranyl-2-thiouridine (geS2U) and subsequent selenation of the latter derivative to 2-selenouridine (Se2U) in the tRNA chain. This chain is tRNA 2-selenouridine synthase, found in Shewanella sediminis (strain HAW-EB3).